Reading from the N-terminus, the 93-residue chain is Small ribosomal subunit protein uS15 (93 aa).

The protein belongs to the universal ribosomal protein uS15 family. Part of the 30S ribosomal subunit. Forms a bridge to the 50S subunit in the 70S ribosome, contacting the 23S rRNA.

One of the primary rRNA binding proteins, it binds directly to 16S rRNA where it helps nucleate assembly of the platform of the 30S subunit by binding and bridging several RNA helices of the 16S rRNA. Functionally, forms an intersubunit bridge (bridge B4) with the 23S rRNA of the 50S subunit in the ribosome. This chain is Small ribosomal subunit protein uS15, found in Anaplasma marginale (strain Florida).